Reading from the N-terminus, the 147-residue chain is uncharacterized protein (147 aa).

An N-acetyltransferase domain is found at 7–147 (LEINYKTDEL…GHDVLVWAPK (141 aa)).

This is an uncharacterized protein from Staphylococcus haemolyticus (strain JCSC1435).